Reading from the N-terminus, the 336-residue chain is Protein-glutamate methylesterase/protein-glutamine glutaminase 3 (336 aa).

The region spanning 2–119 (KIAIVNDMPM…PNPKEAAAPL (118 aa)) is the Response regulatory domain. 4-aspartylphosphate is present on Asp53. A CheB-type methylesterase domain is found at 147-336 (PARRDRLVAI…APRLVEVFTQ (190 aa)). Active-site residues include Ser159, His186, and Asp279.

It belongs to the CheB family. Phosphorylated by CheA. Phosphorylation of the N-terminal regulatory domain activates the methylesterase activity.

Its subcellular location is the cytoplasm. The enzyme catalyses [protein]-L-glutamate 5-O-methyl ester + H2O = L-glutamyl-[protein] + methanol + H(+). It carries out the reaction L-glutaminyl-[protein] + H2O = L-glutamyl-[protein] + NH4(+). Involved in chemotaxis. Part of a chemotaxis signal transduction system that modulates chemotaxis in response to various stimuli. Catalyzes the demethylation of specific methylglutamate residues introduced into the chemoreceptors (methyl-accepting chemotaxis proteins or MCP) by CheR. Also mediates the irreversible deamidation of specific glutamine residues to glutamic acid. The chain is Protein-glutamate methylesterase/protein-glutamine glutaminase 3 from Pseudomonas savastanoi pv. phaseolicola (strain 1448A / Race 6) (Pseudomonas syringae pv. phaseolicola (strain 1448A / Race 6)).